Consider the following 633-residue polypeptide: FAD-binding monooxygenase andJ (633 aa).

FAD contacts are provided by residues 117 to 120 (TWYW), 129 to 130 (DT), and Tyr-135. Residue 127-129 (MCD) participates in NADP(+) binding. Residues 269 to 275 (TGASAVQ) and 292 to 293 (RT) contribute to the NADP(+) site.

This sequence belongs to the FAD-binding monooxygenase family. The cofactor is FAD.

It participates in secondary metabolite biosynthesis; terpenoid biosynthesis. In terms of biological role, FAD-binding monooxygenase; part of the gene cluster that mediates the biosynthesis of anditomin, a fungal meroterpenoid. The first step of the pathway is the synthesis of 3,5-dimethylorsellinic acid (DMOA) by the polyketide synthase andM. DMOA is then converted to the phthalide compound 5,7-dihydroxy-4,6-dimethylphthalide (DHDMP) by the cytochrome P450 monooxygenase andK, which is further prenylated by the prenyltransferase andD to yield farnesyl-DHDMP. Further epoxidation by the FAD-dependent monooxygenase andE leads to epoxyfarnesyl-DHDMP. The next step involves the terpene cyclase andB that converts epoxyfarnesyl-DHDMP into preandiloid A through opening of the epoxide ring followed by the cyclization of the farnesyl moiety. Preandiloid A is in turn oxidized at the C-3 hydroxyl group to yield preandiloid B by the dehydrogenase andC. The dioxygenase andA is solely responsible for the dehydrogenation of preandiloid B leading to the enone preandiloid C, as well as for the intriguing structural rearrangement to generate the bicyclo[2.2.2]octane core, transforming preandiloid C into andiconin. FAD-binding monooxygenase andJ then produces andilesin D which is reduced by dehydrogenase andI to yield andilesin A. Action of acetyltransferase andG followed by a spontaneous acetate elimination leads then to andilesin B, which is in turn substrate of the short chain dehydrogenase andH to yield andilesin C. Finally, the dioxygenase andF catalyzes the transformation of andilesin C to anditomin. The protein is FAD-binding monooxygenase andJ of Emericella variicolor (Aspergillus stellatus).